A 134-amino-acid chain; its full sequence is ATP synthase epsilon chain (134 aa).

The protein belongs to the ATPase epsilon chain family. F-type ATPases have 2 components, CF(1) - the catalytic core - and CF(0) - the membrane proton channel. CF(1) has five subunits: alpha(3), beta(3), gamma(1), delta(1), epsilon(1). CF(0) has three main subunits: a, b and c.

It localises to the cell membrane. In terms of biological role, produces ATP from ADP in the presence of a proton gradient across the membrane. The protein is ATP synthase epsilon chain of Listeria innocua serovar 6a (strain ATCC BAA-680 / CLIP 11262).